Consider the following 146-residue polypeptide: Large ribosomal subunit protein uL15 (146 aa).

Over residues 1–13 (MKLHELYPAEGSR) the composition is skewed to basic and acidic residues. A disordered region spans residues 1–55 (MKLHELYPAEGSRKVRNRVGRGAATGNGKTSGRGQKGQKARSGGKVRPGFEGGQL). The segment covering 23–35 (AATGNGKTSGRGQ) has biased composition (gly residues).

It belongs to the universal ribosomal protein uL15 family. As to quaternary structure, part of the 50S ribosomal subunit.

Binds to the 23S rRNA. The sequence is that of Large ribosomal subunit protein uL15 from Staphylococcus carnosus (strain TM300).